Here is a 612-residue protein sequence, read N- to C-terminus: Pentatricopeptide repeat-containing protein At4g14050, mitochondrial (612 aa).

The N-terminal 24 residues, 1–24, are a transit peptide targeting the mitochondrion; sequence MLIPHYLHQLQLCARNRTLTTAKA. PPR repeat units follow at residues 37 to 71, 72 to 103, 104 to 138, 139 to 169, 170 to 204, 205 to 235, 237 to 271, 272 to 302, 303 to 337, 338 to 373, and 374 to 408; these read CCPL…DHIA, WASV…GLRP, DDFV…EYAN, DEVV…IRVK, NTIS…NLYS, WTAL…RVDI, DPLV…GFDS, CVFI…MRHR, DVVS…GVKP, NEVT…GIRP, and SLQH…PDEP. Residues 409–485 form a type E motif region; it reads TWAALLSACK…DPGHSSVEVR (77 aa). A type E(+) motif region spans residues 486–516; it reads KETEVFYAGETSHPLKEDIFRLLKKLEEEMR. Positions 518–612 are type DYW motif; sequence RNGYVPDTSW…GGKCSCNDFW (95 aa).

The protein belongs to the PPR family. PCMP-H subfamily. Interacts with MORF8/RIP1 and MORF1/RIP8.

It localises to the mitochondrion. Functionally, involved in C-to-U editing of mitochondrial RNA. Required specifically for editing the mitochondrial NAD4, MT-CYB/COB and RPL16 transcripts. This Arabidopsis thaliana (Mouse-ear cress) protein is Pentatricopeptide repeat-containing protein At4g14050, mitochondrial (PCMP-H13).